Reading from the N-terminus, the 330-residue chain is Biotin synthase (330 aa).

A Radical SAM core domain is found at 53–276 (NNIRLNVLLS…VFPFKELRLS (224 aa)). Positions 68, 72, and 75 each coordinate [4Fe-4S] cluster. [2Fe-2S] cluster contacts are provided by Cys-112, Cys-144, Cys-204, and Arg-274.

It belongs to the radical SAM superfamily. Biotin synthase family. In terms of assembly, homodimer. The cofactor is [4Fe-4S] cluster. Requires [2Fe-2S] cluster as cofactor.

It catalyses the reaction (4R,5S)-dethiobiotin + (sulfur carrier)-SH + 2 reduced [2Fe-2S]-[ferredoxin] + 2 S-adenosyl-L-methionine = (sulfur carrier)-H + biotin + 2 5'-deoxyadenosine + 2 L-methionine + 2 oxidized [2Fe-2S]-[ferredoxin]. The protein operates within cofactor biosynthesis; biotin biosynthesis; biotin from 7,8-diaminononanoate: step 2/2. Functionally, catalyzes the conversion of dethiobiotin (DTB) to biotin by the insertion of a sulfur atom into dethiobiotin via a radical-based mechanism. The chain is Biotin synthase from Streptococcus agalactiae serotype III (strain NEM316).